We begin with the raw amino-acid sequence, 478 residues long: Chromosomal replication initiator protein DnaA (478 aa).

The domain I, interacts with DnaA modulators stretch occupies residues 1 to 71; that stretch reads MKEFWQTCVS…EALAAEWFQR (71 aa). Positions 71–140 are domain II; that stretch reads RPVQVAFELP…DAAGVVYERS (70 aa). The tract at residues 141–357 is domain III, AAA+ region; it reads RLNTDLTFDN…GALRKVLAYA (217 aa). Positions 185, 187, 188, and 189 each coordinate ATP. The domain IV, binds dsDNA stretch occupies residues 358–478; that stretch reads RFHGRDVLSV…LHVLEQTLKG (121 aa).

It belongs to the DnaA family. In terms of assembly, oligomerizes as a right-handed, spiral filament on DNA at oriC.

The protein resides in the cytoplasm. Plays an essential role in the initiation and regulation of chromosomal replication. ATP-DnaA binds to the origin of replication (oriC) to initiate formation of the DNA replication initiation complex once per cell cycle. Binds the DnaA box (a 9 base pair repeat at the origin) and separates the double-stranded (ds)DNA. Forms a right-handed helical filament on oriC DNA; dsDNA binds to the exterior of the filament while single-stranded (ss)DNA is stabiized in the filament's interior. The ATP-DnaA-oriC complex binds and stabilizes one strand of the AT-rich DNA unwinding element (DUE), permitting loading of DNA polymerase. After initiation quickly degrades to an ADP-DnaA complex that is not apt for DNA replication. Binds acidic phospholipids. In Bordetella petrii (strain ATCC BAA-461 / DSM 12804 / CCUG 43448), this protein is Chromosomal replication initiator protein DnaA.